The sequence spans 625 residues: Protein arginine N-methyltransferase skb1 (625 aa).

Positions 280 to 588 (LQVPLQPLSY…WRLTDGMRVW (309 aa)) constitute an SAM-dependent MTase PRMT-type domain. S-adenosyl-L-methionine contacts are provided by residues Y296, 305–306 (KY), E359, and 386–387 (DM). Active-site proton donor/acceptor residues include E402 and E411.

The protein belongs to the class I-like SAM-binding methyltransferase superfamily. Protein arginine N-methyltransferase family. In terms of assembly, interacts with the N-terminal regulatory domain of shk1. Shk1, cdc42 and skb1 are able to form a ternary complex in vivo. Interacts with orb6. Interacts with Cdr1 and the Cdr1 inhibitory target Wee1.

It is found in the nucleus. Its subcellular location is the cell tip. It localises to the cell septum. The protein resides in the cytoplasm. The protein localises to the cell cortex. In terms of biological role, S-adenosyl-L-methionine-dependent protein-arginine N-methyltransferase that can catalyze both the mono- and symmetric (type II) dimethylation of the guanidino nitrogens of arginine residues in target proteins. Delays mitotic entry by inhibiting the Cdr1-Wee1 signaling pathway. Cortical nodes sequester Skb1 from its regulatory targets Cdr1 and Wee1. Positively modulates the shk1 kinase function. May be a mediator of hyperosmotic stress response. Involved in the control of cell polarity by regulating the subcellular localization of Orb6 kinase. This chain is Protein arginine N-methyltransferase skb1, found in Schizosaccharomyces pombe (strain 972 / ATCC 24843) (Fission yeast).